The following is a 446-amino-acid chain: Ribosomal protein uS12 methylthiotransferase RimO (446 aa).

The 113-residue stretch at 10-122 (KTLHMVSLGC…IDELVNEKRS (113 aa)) folds into the MTTase N-terminal domain. Cysteine 19, cysteine 53, cysteine 85, cysteine 154, cysteine 158, and cysteine 161 together coordinate [4Fe-4S] cluster. A Radical SAM core domain is found at 140–369 (TGSSYHAYVK…GEIISQTTQE (230 aa)). One can recognise a TRAM domain in the interval 372–446 (ESEVGKTFEV…GDKLLATVIK (75 aa)).

This sequence belongs to the methylthiotransferase family. RimO subfamily. [4Fe-4S] cluster is required as a cofactor.

The protein resides in the cytoplasm. It carries out the reaction L-aspartate(89)-[ribosomal protein uS12]-hydrogen + (sulfur carrier)-SH + AH2 + 2 S-adenosyl-L-methionine = 3-methylsulfanyl-L-aspartate(89)-[ribosomal protein uS12]-hydrogen + (sulfur carrier)-H + 5'-deoxyadenosine + L-methionine + A + S-adenosyl-L-homocysteine + 2 H(+). Catalyzes the methylthiolation of an aspartic acid residue of ribosomal protein uS12. This Aliarcobacter butzleri (strain RM4018) (Arcobacter butzleri) protein is Ribosomal protein uS12 methylthiotransferase RimO.